Here is a 94-residue protein sequence, read N- to C-terminus: Protein RnfH (94 aa).

This sequence belongs to the UPF0125 (RnfH) family.

The protein is Protein RnfH of Serratia proteamaculans (strain 568).